A 469-amino-acid chain; its full sequence is Reticulon-2 (469 aa).

Disordered stretches follow at residues 1-180 and 201-238; these read MGQV…EASE and LTPQ…NGEG. The span at 14–25 shows a compositional bias: low complexity; that stretch reads APSTASSTPDST. The span at 32–43 shows a compositional bias: basic and acidic residues; the sequence is SDFRELHTAREF. Serine 44 is subject to Phosphoserine. The segment covering 135–144 has biased composition (basic and acidic residues); that stretch reads RPLEELRLRL. 2 stretches are compositionally biased toward polar residues: residues 159-168 and 203-226; these read DSATSSSTPL and PQLS…QDLN. The 200-residue stretch at 270–469 folds into the Reticulon domain; the sequence is VADLLYWKDT…SVSGSKAKAE (200 aa). Transmembrane regions (helical) follow at residues 293–313 and 388–408; these read LLCL…LLGL and LLFY…LVIL.

As to quaternary structure, interacts with SPAST. Interacts with BACE1. Interacts (via first transmembrane domain) with ARL6IP5/GTRAP3-18. Interacts (via N-terminus) with SLC1A1/EAAC1; the interaction promotes cell surface expression of SLC1A1. In terms of tissue distribution, expressed in brain and spinal cord (at protein level). In the embryonic brain cortex, expressed in neurons but not in astrocytes (at protein level).

It localises to the endoplasmic reticulum membrane. It is found in the sarcoplasmic reticulum membrane. The protein localises to the cell membrane. The protein resides in the sarcolemma. Its subcellular location is the T-tubule. It localises to the cytoplasm. It is found in the myofibril. The protein localises to the sarcomere. The protein resides in the z line. Its subcellular location is the cytoskeleton. Functionally, inhibits amyloid precursor protein processing, probably by blocking BACE1 activity. Enhances trafficking of the glutamate transporter SLC1A1/EAAC1 from the endoplasmic reticulum to the cell surface. Plays a role in the translocation of SLC2A4/GLUT4 from intracellular membranes to the cell membrane which facilitates the uptake of glucose into the cell. This Rattus norvegicus (Rat) protein is Reticulon-2.